The following is a 122-amino-acid chain: Large ribosomal subunit protein uL14 (122 aa).

This sequence belongs to the universal ribosomal protein uL14 family. Part of the 50S ribosomal subunit. Forms a cluster with proteins L3 and L19. In the 70S ribosome, L14 and L19 interact and together make contacts with the 16S rRNA in bridges B5 and B8.

Binds to 23S rRNA. Forms part of two intersubunit bridges in the 70S ribosome. This chain is Large ribosomal subunit protein uL14, found in Frankia alni (strain DSM 45986 / CECT 9034 / ACN14a).